The following is a 138-amino-acid chain: 18 kDa antigen 2 (138 aa).

Residues 21–131 (GTRRPAVMPM…KPRRIEINHN (111 aa)) form the sHSP domain.

Belongs to the small heat shock protein (HSP20) family.

Functionally, not known. This protein is one of the major immune reactive proteins in mycobacteria. In Mycobacterium avium, this protein is 18 kDa antigen 2.